An 840-amino-acid polypeptide reads, in one-letter code: Probable inorganic carbon transporter subunit DabA (840 aa).

Zn(2+) contacts are provided by Cys355, Asp357, His539, and Cys554.

It belongs to the inorganic carbon transporter (TC 9.A.2) DabA family. Forms a complex with DabB. Requires Zn(2+) as cofactor.

The protein resides in the cell membrane. In terms of biological role, part of an energy-coupled inorganic carbon pump. The sequence is that of Probable inorganic carbon transporter subunit DabA from Roseiflexus castenholzii (strain DSM 13941 / HLO8).